The chain runs to 409 residues: Elongation factor Tu (409 aa).

Residues 10–214 (KPHVNIGTIG…AVDDNIPEPE (205 aa)) enclose the tr-type G domain. Residues 19-26 (GHVDHGKT) form a G1 region. GTP is bound at residue 19–26 (GHVDHGKT). Mg(2+) is bound at residue Thr26. The G2 stretch occupies residues 60–64 (GITIN). The G3 stretch occupies residues 81 to 84 (DCPG). GTP contacts are provided by residues 81–85 (DCPGH) and 136–139 (NKKD). The segment at 136 to 139 (NKKD) is G4. The G5 stretch occupies residues 174–176 (SAL).

This sequence belongs to the TRAFAC class translation factor GTPase superfamily. Classic translation factor GTPase family. EF-Tu/EF-1A subfamily. As to quaternary structure, monomer.

Its subcellular location is the cytoplasm. The catalysed reaction is GTP + H2O = GDP + phosphate + H(+). GTP hydrolase that promotes the GTP-dependent binding of aminoacyl-tRNA to the A-site of ribosomes during protein biosynthesis. The sequence is that of Elongation factor Tu from Crocosphaera subtropica (strain ATCC 51142 / BH68) (Cyanothece sp. (strain ATCC 51142)).